Reading from the N-terminus, the 225-residue chain is Ribonuclease 3 (225 aa).

In terms of domain architecture, RNase III spans L5–D127. E40 is a Mg(2+) binding site. D44 is an active-site residue. Residues D113 and E116 each coordinate Mg(2+). E116 is a catalytic residue. One can recognise a DRBM domain in the interval D154–M224.

The protein belongs to the ribonuclease III family. As to quaternary structure, homodimer. It depends on Mg(2+) as a cofactor.

The protein localises to the cytoplasm. It carries out the reaction Endonucleolytic cleavage to 5'-phosphomonoester.. Functionally, digests double-stranded RNA. Involved in the processing of primary rRNA transcript to yield the immediate precursors to the large and small rRNAs (23S and 16S). Also processes some mRNAs, and tRNAs when they are encoded in the rRNA operon. CRISPR (clustered regularly interspaced short palindromic repeat) is an adaptive immune system that provides protection against mobile genetic elements (viruses, transposable elements and conjugative plasmids). CRISPR clusters contain spacers, sequences complementary to antecedent mobile elements, and target invading nucleic acids. CRISPR clusters are transcribed and processed into CRISPR RNA (crRNA). In this organism endogenous ribonuclease 3 and Cas9 are required for correct coprocessing of pre-crRNA and the trans-encoded small RNA (tracrRNA). Cas9, crRNA and tracrRNA are required for cleavage of invading DNA. Complements pre-crRNA and tracrRNA coprocessing defects in an rnc deletion in S.pyogenes strain 370. The protein is Ribonuclease 3 of Pasteurella multocida (strain Pm70).